The primary structure comprises 227 residues: Cytochrome c oxidase subunit 2 (227 aa).

Topologically, residues 1–14 are mitochondrial intermembrane; the sequence is MAYPMQLGLQDATS. A helical transmembrane segment spans residues 15–45; the sequence is PIMEELLHFHDHTLMIVFLISSLVLYIISLM. At 46-59 the chain is on the mitochondrial matrix side; the sequence is LTTKLTHTSTMDAQ. A helical transmembrane segment spans residues 60–87; that stretch reads EVETIWTILPAIILIMIALPSLRILYMM. At 88–227 the chain is on the mitochondrial intermembrane side; it reads DEINNPSLTV…HFEKWSASML (140 aa). Cu cation contacts are provided by His161, Cys196, Glu198, Cys200, His204, and Met207. Glu198 is a Mg(2+) binding site.

It belongs to the cytochrome c oxidase subunit 2 family. As to quaternary structure, component of the cytochrome c oxidase (complex IV, CIV), a multisubunit enzyme composed of 14 subunits. The complex is composed of a catalytic core of 3 subunits MT-CO1, MT-CO2 and MT-CO3, encoded in the mitochondrial DNA, and 11 supernumerary subunits COX4I, COX5A, COX5B, COX6A, COX6B, COX6C, COX7A, COX7B, COX7C, COX8 and NDUFA4, which are encoded in the nuclear genome. The complex exists as a monomer or a dimer and forms supercomplexes (SCs) in the inner mitochondrial membrane with NADH-ubiquinone oxidoreductase (complex I, CI) and ubiquinol-cytochrome c oxidoreductase (cytochrome b-c1 complex, complex III, CIII), resulting in different assemblies (supercomplex SCI(1)III(2)IV(1) and megacomplex MCI(2)III(2)IV(2)). Found in a complex with TMEM177, COA6, COX18, COX20, SCO1 and SCO2. Interacts with TMEM177 in a COX20-dependent manner. Interacts with COX20. Interacts with COX16. Cu cation serves as cofactor.

It is found in the mitochondrion inner membrane. It catalyses the reaction 4 Fe(II)-[cytochrome c] + O2 + 8 H(+)(in) = 4 Fe(III)-[cytochrome c] + 2 H2O + 4 H(+)(out). In terms of biological role, component of the cytochrome c oxidase, the last enzyme in the mitochondrial electron transport chain which drives oxidative phosphorylation. The respiratory chain contains 3 multisubunit complexes succinate dehydrogenase (complex II, CII), ubiquinol-cytochrome c oxidoreductase (cytochrome b-c1 complex, complex III, CIII) and cytochrome c oxidase (complex IV, CIV), that cooperate to transfer electrons derived from NADH and succinate to molecular oxygen, creating an electrochemical gradient over the inner membrane that drives transmembrane transport and the ATP synthase. Cytochrome c oxidase is the component of the respiratory chain that catalyzes the reduction of oxygen to water. Electrons originating from reduced cytochrome c in the intermembrane space (IMS) are transferred via the dinuclear copper A center (CU(A)) of subunit 2 and heme A of subunit 1 to the active site in subunit 1, a binuclear center (BNC) formed by heme A3 and copper B (CU(B)). The BNC reduces molecular oxygen to 2 water molecules using 4 electrons from cytochrome c in the IMS and 4 protons from the mitochondrial matrix. The chain is Cytochrome c oxidase subunit 2 (MT-CO2) from Damaliscus pygargus phillipsi (Blesbok).